A 58-amino-acid polypeptide reads, in one-letter code: Transactivator protein ORF121 (58 aa).

In terms of biological role, stimulates the expression of 39k gene most probably by increasing IE1 expression. In Lepidoptera (butterflies and moths), this protein is Transactivator protein ORF121 (AC121).